Consider the following 169-residue polypeptide: Sulfopyruvate decarboxylase subunit alpha (169 aa).

It belongs to the ComD family. Heterododecamer composed of 6 subunits alpha and 6 subunits beta.

The catalysed reaction is 3-sulfopyruvate + H(+) = sulfoacetaldehyde + CO2. Its pathway is cofactor biosynthesis; coenzyme M biosynthesis; sulfoacetaldehyde from phosphoenolpyruvate and sulfite: step 4/4. Inhibited by oxygen when heated in air at 80 degrees Celsius. The enzyme is reactivated by addition of dithionite. Functionally, involved in the biosynthesis of the coenzyme M (2-mercaptoethanesulfonic acid). Catalyzes the decarboxylation of sulfopyruvate to sulfoacetaldehyde. This Methanocaldococcus jannaschii (strain ATCC 43067 / DSM 2661 / JAL-1 / JCM 10045 / NBRC 100440) (Methanococcus jannaschii) protein is Sulfopyruvate decarboxylase subunit alpha.